We begin with the raw amino-acid sequence, 447 residues long: Cellulosome-anchoring protein (447 aa).

Positions 1–29 (MKRIKRILAVLTIFALLATINAFTFVSLA) are cleaved as a signal peptide. The Cohesin domain occupies 30–180 (QTNTIEIIIG…EIIEASAPEA (151 aa)). The interval 30-180 (QTNTIEIIIG…EIIEASAPEA (151 aa)) is receptor binding site for duplicated segment of CipA. Residues 177–247 (APEATPTPGS…EHAPFLKGYP (71 aa)) are disordered. Residues 188–200 (AGSGAGGGTGSSG) are compositionally biased toward gly residues. Residues 201-223 (SGQPSATPTPTATEKPSTTPKTT) are compositionally biased toward low complexity. 3 consecutive SLH domains span residues 216–280 (PSTT…AGKN), 281–344 (SSIT…EQGT), and 345–408 (DVKT…GAVL). The region spanning 409 to 429 (EFTDVPVNYWAYKDIAEGVIY) is the SLH 4; truncated domain.

It localises to the secreted. It is found in the cell wall. The protein localises to the S-layer. In terms of biological role, anchors the cellulosome to the cell surface by binding the duplicated segment that is present at the C-terminal end of CipA. In Acetivibrio thermocellus (strain ATCC 27405 / DSM 1237 / JCM 9322 / NBRC 103400 / NCIMB 10682 / NRRL B-4536 / VPI 7372) (Clostridium thermocellum), this protein is Cellulosome-anchoring protein (ancA).